Reading from the N-terminus, the 2931-residue chain is Probable polyketide synthase 9/36 (2931 aa).

The Ketosynthase family 3 (KS3) domain maps to 11–442 (EKGVAIVGIG…GSNCCLLISE (432 aa)). Residues cysteine 181, histidine 323, and histidine 362 each act as for beta-ketoacyl synthase activity in the active site. The tract at residues 635 to 668 (GVNPSFILGHSLGEISASYCSGMIDLDTFCYTVY) is acyl/malonyl transferase. Serine 645 serves as the catalytic For acyl/malonyl transferase activity. The segment at 925-1047 (IDHLGTSNSY…ANFQLLDHGN (123 aa)) is N-terminal hotdog fold. A PKS/mFAS DH domain is found at 925 to 1209 (IDHLGTSNSY…CKSLIPIKDS (285 aa)). Histidine 959 functions as the Proton acceptor; for dehydratase activity in the catalytic mechanism. The tract at residues 1064–1209 (NLSKLTKNEL…CKSLIPIKDS (146 aa)) is C-terminal hotdog fold. The Proton donor; for dehydratase activity role is filled by aspartate 1122. Residues 2293-2313 (LINFVMASSAISLIGSTDLCT) form a helical membrane-spanning segment. The region spanning 2429-2506 (TGNKNIDELF…TSMKMILNSL (78 aa)) is the Carrier domain. O-(pantetheine 4'-phosphoryl)serine is present on serine 2466. Residues 2553 to 2573 (KIILLTGTTGFLGGFLLFNMV) traverse the membrane as a helical segment.

It depends on pantetheine 4'-phosphate as a cofactor.

The protein localises to the membrane. Probable polyketide synthase. This Dictyostelium discoideum (Social amoeba) protein is Probable polyketide synthase 9/36 (pks9).